Reading from the N-terminus, the 144-residue chain is Subtilase-type protease inhibitor (144 aa).

Residues 1–35 form the signal peptide; the sequence is MRNTARWAATLGLTATAVCGPLAGASLASPATAPA. Disulfide bonds link cysteine 66/cysteine 81 and cysteine 102/cysteine 132.

The protein belongs to the protease inhibitor I16 (SSI) family. As to quaternary structure, homodimer.

The protein resides in the secreted. In terms of biological role, strong inhibitory activity toward subtilisin BPN' and, to a lesser extent, toward trypsin. The protein is Subtilase-type protease inhibitor (sti1) of Streptomyces coelicolor (strain ATCC BAA-471 / A3(2) / M145).